Here is a 572-residue protein sequence, read N- to C-terminus: NADH-ubiquinone oxidoreductase chain 5 (572 aa).

17 helical membrane-spanning segments follow: residues 6–26, 44–64, 86–106, 107–127, 147–167, 179–201, 208–230, 234–254, 268–288, 291–311, 337–357, 372–394, 422–442, 454–474, 479–499, 524–544, and 552–572; these read FFFLFLFSTLFFILGIYYLMI, VVMTFIIDWMSLVFMSFVMYI, IMIVLMFILSMAFLIISPNLI, SILLGWDGLGLVSYCLVIYYQ, VAILISISWMLNFGSWNYIYY, IITLLIILAAMTKSAQIPFSSWL, PTPVSALVHSSTLVTAGVYLLIR, MLMVYDFGWYILFIGCLTMFM, IIALSTLSQLGLMMSILSMGY, LAFFHLLTHALFKALLFMCAG, SICFNVSSLCLCGMPFLAGFY, NFFIFFLYFFSTGLTASYSFRLF, IGLLIVAVFGGSLLSWLIFPV, FLTLLTIILGSYFGYVISDFV, LFSLNFLSFVMFTGSMWFMPF, WGELLGGQGLYSFFVYLINYI, and FKVYLLTFVFWMFILFVLFFL.

This sequence belongs to the complex I subunit 5 family.

It is found in the mitochondrion inner membrane. The enzyme catalyses a ubiquinone + NADH + 5 H(+)(in) = a ubiquinol + NAD(+) + 4 H(+)(out). Core subunit of the mitochondrial membrane respiratory chain NADH dehydrogenase (Complex I) that is believed to belong to the minimal assembly required for catalysis. Complex I functions in the transfer of electrons from NADH to the respiratory chain. The immediate electron acceptor for the enzyme is believed to be ubiquinone. This is NADH-ubiquinone oxidoreductase chain 5 (ND5) from Locusta migratoria (Migratory locust).